The primary structure comprises 64 residues: Large ribosomal subunit protein bL33c (64 aa).

It belongs to the bacterial ribosomal protein bL33 family.

It is found in the plastid. Its subcellular location is the cyanelle. The chain is Large ribosomal subunit protein bL33c (rpl33) from Cyanophora paradoxa.